A 332-amino-acid chain; its full sequence is DNA-directed RNA polymerase subunit alpha (332 aa).

The alpha N-terminal domain (alpha-NTD) stretch occupies residues 1–244 (MKKHAKVYYS…AHLNLLADVE (244 aa)). The segment at 259-332 (IKEEPIRRFS…NYKNENKGEN (74 aa)) is alpha C-terminal domain (alpha-CTD).

The protein belongs to the RNA polymerase alpha chain family. Homodimer. The RNAP catalytic core consists of 2 alpha, 1 beta, 1 beta' and 1 omega subunit. When a sigma factor is associated with the core the holoenzyme is formed, which can initiate transcription.

The catalysed reaction is RNA(n) + a ribonucleoside 5'-triphosphate = RNA(n+1) + diphosphate. Functionally, DNA-dependent RNA polymerase catalyzes the transcription of DNA into RNA using the four ribonucleoside triphosphates as substrates. The protein is DNA-directed RNA polymerase subunit alpha of Mesomycoplasma hyopneumoniae (strain 7448) (Mycoplasma hyopneumoniae).